A 596-amino-acid chain; its full sequence is MGKIQELSPELINQIAAGEVIESAHSVVKELMENSMDAGATQMDIESKDGGLSLLRITDNGSGIDPEDIEPALKRHATSKIRDYGDLENVLSYGFRGEALASIASVSRLTLESGIKNQKTAWKICSIGGKISEKEEIPGFVGTKILVEELFFNTPVRRKFLKSVRSEDKKIRDRVTTQALARHDVRFRLFQDGKEVFVLPSRENKKDRIVDLFGENFRDHLLEVSLERGGLNATGYISDPDFYKSNRTGQFVFVNGRPVEIKYGSTLLKKAYDELLPPNGHPYCFLFFEIDPSRVDVNVHPAKKEIRFLDEEGFNGFFLTLIQKELRSSTPVSFLELKKRLLRPTPETFKTSSLYQAHSSSRSGESPLLSRELFTEVPRQEGFDLDRMGPGASLSALTDNVVKHSSFVPKKHFGVLFETFILAEAEDGFYIIDQHTAHERIRYEEVLRKLEKKNYGIQPLLTPIRIDVSKQEQEDILNRKKEYEEVGIFLDPLGEDSVVLREIPAYMEPGEEKEIILDFLNRTEGKETTEPELYDLMAKCVACRSAIKKGDHLSDPILAEILNRLSYCENPSRCPHGRPTLVKLSRDDLERMFHRK.

Belongs to the DNA mismatch repair MutL/HexB family.

Functionally, this protein is involved in the repair of mismatches in DNA. It is required for dam-dependent methyl-directed DNA mismatch repair. May act as a 'molecular matchmaker', a protein that promotes the formation of a stable complex between two or more DNA-binding proteins in an ATP-dependent manner without itself being part of a final effector complex. The chain is DNA mismatch repair protein MutL from Leptospira borgpetersenii serovar Hardjo-bovis (strain L550).